The primary structure comprises 439 residues: FBD-associated F-box protein At5g56380 (439 aa).

Residues M1–P61 form the F-box domain. The region spanning W358–T406 is the FBD domain.

In Arabidopsis thaliana (Mouse-ear cress), this protein is FBD-associated F-box protein At5g56380.